Here is a 137-residue protein sequence, read N- to C-terminus: Cellular retinoic acid-binding protein 1 (137 aa).

A Nuclear localization signal motif is present at residues 21–31; sequence KALGVNAMLRK. 132 to 134 contacts all-trans-retinoate; it reads RIY.

It belongs to the calycin superfamily. Fatty-acid binding protein (FABP) family.

The protein localises to the cytoplasm. Functionally, cytosolic CRABPs may regulate the access of retinoic acid to the nuclear retinoic acid receptors. In Hippocampus comes (Tiger tail seahorse), this protein is Cellular retinoic acid-binding protein 1 (crabp1).